Consider the following 493-residue polypeptide: Activin receptor type-1C (493 aa).

An N-terminal signal peptide occupies residues 1 to 20; sequence MTRALCSALRQALLLLAAAA. Residues 22 to 113 lie on the Extracellular side of the membrane; that stretch reads LSPGLKCVCL…PNAPKLGPME (92 aa). A helical transmembrane segment spans residues 114 to 134; sequence LAIIITVPVCLLSIAAMLTVW. Residues 135–493 are Cytoplasmic-facing; the sequence is ACQGRQCSYR…QLCVKEDCKA (359 aa). Residues 165–194 form the GS domain; sequence KTLKDLIYDVTASGSGSGLPLLVQRTIART. The region spanning 195-485 is the Protein kinase domain; that stretch reads IVLQEIVGKG…LRIKKTISQL (291 aa). ATP-binding positions include 201–209 and Lys222; that span reads VGKGRFGEV. Asp323 (proton acceptor) is an active-site residue.

The protein belongs to the protein kinase superfamily. TKL Ser/Thr protein kinase family. TGFB receptor subfamily. As to quaternary structure, binds the type 2 receptor protein ACVR2A. Mg(2+) is required as a cofactor. Mn(2+) serves as cofactor. In terms of tissue distribution, present in pancreas, heart, colon, small intestine, ovary and the hippocampus, medulla oblongata and putamen of the brain. Isoform 1, isoform 2, isoform 3 and isoform 4 are all expressed in the placenta throughout pregnancy.

It is found in the membrane. The catalysed reaction is L-threonyl-[receptor-protein] + ATP = O-phospho-L-threonyl-[receptor-protein] + ADP + H(+). It catalyses the reaction L-seryl-[receptor-protein] + ATP = O-phospho-L-seryl-[receptor-protein] + ADP + H(+). Functionally, serine/threonine protein kinase which forms a receptor complex on ligand binding. The receptor complex consists of 2 type II and 2 type I transmembrane serine/threonine kinases. Type II receptors phosphorylate and activate type I receptors which autophosphorylate, then bind and activate SMAD transcriptional regulators, SMAD2 and SMAD3. Receptor for activin AB, activin B, activin E and NODAL. Upon NODAL binding, activation results in increased apoptosis and reduced proliferation through suppression of AKT signaling and the activation of Smad2-dependent signaling pathway in pancreatic beta-cells, trophoblasts, epithelial or neuronal cells. Acts as a positive regulator for macrophage activation partially through down-regulation of PPARG expression. The sequence is that of Activin receptor type-1C from Homo sapiens (Human).